Reading from the N-terminus, the 84-residue chain is Small ribosomal subunit protein bS20 (84 aa).

Belongs to the bacterial ribosomal protein bS20 family.

Functionally, binds directly to 16S ribosomal RNA. This is Small ribosomal subunit protein bS20 from Latilactobacillus sakei subsp. sakei (strain 23K) (Lactobacillus sakei subsp. sakei).